A 299-amino-acid chain; its full sequence is NAD kinase 1 (299 aa).

The active-site Proton acceptor is the Asp62. Residues 62–63 (DG), Lys67, 143–144 (ND), Lys173, and Asp175 contribute to the NAD(+) site.

Belongs to the NAD kinase family. A divalent metal cation serves as cofactor.

It is found in the cytoplasm. The enzyme catalyses NAD(+) + ATP = ADP + NADP(+) + H(+). In terms of biological role, involved in the regulation of the intracellular balance of NAD and NADP, and is a key enzyme in the biosynthesis of NADP. Catalyzes specifically the phosphorylation on 2'-hydroxyl of the adenosine moiety of NAD to yield NADP. The polypeptide is NAD kinase 1 (Prochlorococcus marinus subsp. pastoris (strain CCMP1986 / NIES-2087 / MED4)).